Reading from the N-terminus, the 122-residue chain is Large ribosomal subunit protein uL14 (122 aa).

This sequence belongs to the universal ribosomal protein uL14 family. As to quaternary structure, part of the 50S ribosomal subunit. Forms a cluster with proteins L3 and L19. In the 70S ribosome, L14 and L19 interact and together make contacts with the 16S rRNA in bridges B5 and B8.

Its function is as follows. Binds to 23S rRNA. Forms part of two intersubunit bridges in the 70S ribosome. This Mycobacterium tuberculosis (strain ATCC 25177 / H37Ra) protein is Large ribosomal subunit protein uL14.